Here is a 271-residue protein sequence, read N- to C-terminus: 2,3,4,5-tetrahydropyridine-2,6-dicarboxylate N-succinyltransferase (271 aa).

Substrate contacts are provided by arginine 103 and aspartate 140.

The protein belongs to the transferase hexapeptide repeat family. Homotrimer.

Its subcellular location is the cytoplasm. It carries out the reaction (S)-2,3,4,5-tetrahydrodipicolinate + succinyl-CoA + H2O = (S)-2-succinylamino-6-oxoheptanedioate + CoA. It participates in amino-acid biosynthesis; L-lysine biosynthesis via DAP pathway; LL-2,6-diaminopimelate from (S)-tetrahydrodipicolinate (succinylase route): step 1/3. This Methylococcus capsulatus (strain ATCC 33009 / NCIMB 11132 / Bath) protein is 2,3,4,5-tetrahydropyridine-2,6-dicarboxylate N-succinyltransferase.